The sequence spans 236 residues: MEYILEVERNLFLTLNGVQHPLLDGFFYLISAKWTWVIMSIAFLFFLFYKKPTKEALFIVGAVLLSVLICDQLSSSFFKPFFARFRPSHHPDFIDYVKTVYGYRGGKYGFISGHTTNYISLALFTSRIFRNKFYTWTIWSVVALVIYSRIYIGVHFITDIIPGIAVGLIVGHFVYKVYLYARSRWLGASCPAHPSAVYAGDSIRLWTLSLIGFVFAMLCMSRQLTEILQYYVFLLF.

The next 5 helical transmembrane spans lie at 26-46 (FFYL…FLFF), 58-78 (FIVG…SSFF), 134-153 (YTWT…IYIG), 160-182 (IIPG…LYAR), and 200-220 (GDSI…MLCM).

It belongs to the lipid A LpxF 4'-phosphatase family.

It localises to the cell inner membrane. The protein operates within bacterial outer membrane biogenesis; LPS lipid A biosynthesis. Functionally, removes the 4'-phosphate group from lipid A species. Absence of phosphate groups in lipid A renders the bacteria resistant to host-derived cationic antimicrobial peptides (CAMP) and allows it to camouflage itself from the host innate immune response. Removal of the 4'-phosphate may be required to generate the substrate for deacylation of the pentaacyl lipid A to the tetraccylated lipid A species. The sequence is that of Lipid A 4'-phosphatase from Porphyromonas gingivalis (strain ATCC 33277 / DSM 20709 / CIP 103683 / JCM 12257 / NCTC 11834 / 2561).